Consider the following 210-residue polypeptide: Large ribosomal subunit protein uL3 (210 aa).

The protein belongs to the universal ribosomal protein uL3 family. In terms of assembly, part of the 50S ribosomal subunit. Forms a cluster with proteins L14 and L19.

One of the primary rRNA binding proteins, it binds directly near the 3'-end of the 23S rRNA, where it nucleates assembly of the 50S subunit. This is Large ribosomal subunit protein uL3 from Lawsonia intracellularis (strain PHE/MN1-00).